Here is a 357-residue protein sequence, read N- to C-terminus: Probable dual-specificity RNA methyltransferase RlmN (357 aa).

The Proton acceptor role is filled by Glu-95. The Radical SAM core domain maps to 106-340 (NRDRHTVCVS…VSVREEKGTD (235 aa)). The cysteines at positions 113 and 345 are disulfide-linked. Positions 120, 124, and 127 each coordinate [4Fe-4S] cluster. S-adenosyl-L-methionine contacts are provided by residues 172-173 (GE), Ser-204, 227-229 (SLH), and Asn-302. The active-site S-methylcysteine intermediate is Cys-345.

Belongs to the radical SAM superfamily. RlmN family. Requires [4Fe-4S] cluster as cofactor.

The protein localises to the cytoplasm. It carries out the reaction adenosine(2503) in 23S rRNA + 2 reduced [2Fe-2S]-[ferredoxin] + 2 S-adenosyl-L-methionine = 2-methyladenosine(2503) in 23S rRNA + 5'-deoxyadenosine + L-methionine + 2 oxidized [2Fe-2S]-[ferredoxin] + S-adenosyl-L-homocysteine. The catalysed reaction is adenosine(37) in tRNA + 2 reduced [2Fe-2S]-[ferredoxin] + 2 S-adenosyl-L-methionine = 2-methyladenosine(37) in tRNA + 5'-deoxyadenosine + L-methionine + 2 oxidized [2Fe-2S]-[ferredoxin] + S-adenosyl-L-homocysteine. Functionally, specifically methylates position 2 of adenine 2503 in 23S rRNA and position 2 of adenine 37 in tRNAs. The sequence is that of Probable dual-specificity RNA methyltransferase RlmN from Desulfitobacterium hafniense (strain DSM 10664 / DCB-2).